Here is a 213-residue protein sequence, read N- to C-terminus: Protein-L-isoaspartate O-methyltransferase (213 aa).

Residue Ser-62 is part of the active site.

The protein belongs to the methyltransferase superfamily. L-isoaspartyl/D-aspartyl protein methyltransferase family.

Its subcellular location is the cytoplasm. It carries out the reaction [protein]-L-isoaspartate + S-adenosyl-L-methionine = [protein]-L-isoaspartate alpha-methyl ester + S-adenosyl-L-homocysteine. Its function is as follows. Catalyzes the methyl esterification of L-isoaspartyl residues in peptides and proteins that result from spontaneous decomposition of normal L-aspartyl and L-asparaginyl residues. It plays a role in the repair and/or degradation of damaged proteins. In Desulfovibrio desulfuricans (strain ATCC 27774 / DSM 6949 / MB), this protein is Protein-L-isoaspartate O-methyltransferase.